A 313-amino-acid chain; its full sequence is Ribosomal protein L11 methyltransferase (313 aa).

Residues Thr161, Gly182, Asp204, and Asn247 each coordinate S-adenosyl-L-methionine.

This sequence belongs to the methyltransferase superfamily. PrmA family.

Its subcellular location is the cytoplasm. The enzyme catalyses L-lysyl-[protein] + 3 S-adenosyl-L-methionine = N(6),N(6),N(6)-trimethyl-L-lysyl-[protein] + 3 S-adenosyl-L-homocysteine + 3 H(+). Functionally, methylates ribosomal protein L11. In Halalkalibacterium halodurans (strain ATCC BAA-125 / DSM 18197 / FERM 7344 / JCM 9153 / C-125) (Bacillus halodurans), this protein is Ribosomal protein L11 methyltransferase.